The chain runs to 900 residues: Translation initiation factor IF-2 (900 aa).

2 disordered regions span residues 30-77 (GEFV…SLDK) and 89-291 (NGKA…YDSM). Residues 89–112 (NGKATAAPAKAADSGGAAIVSPTT) are compositionally biased toward low complexity. Over residues 113 to 129 (PAAPEPPTAVPPSPQAP) the composition is skewed to pro residues. Residues 175–187 (PGTARPGVPRPGA) show a composition bias toward low complexity. Positions 215–271 (GRPGAPGAGRSDAGGGNYRGGGVGAAPGTGFRGRPGGGGGGRPGQRGGAAGAFGRPG) are enriched in gly residues. Residues 275-284 (RRGRKSKRQK) show a composition bias toward basic residues. The 172-residue stretch at 396 to 567 (VRPPVVTVMG…AVLLTADAAL (172 aa)) folds into the tr-type G domain. The segment at 405–412 (GHVDHGKT) is G1. Residue 405 to 412 (GHVDHGKT) participates in GTP binding. The G2 stretch occupies residues 430–434 (GITQH). Residues 455–458 (DTPG) are G3. Residues 455–459 (DTPGH) and 509–512 (NKID) contribute to the GTP site. The interval 509 to 512 (NKID) is G4. The interval 545 to 547 (SAK) is G5.

This sequence belongs to the TRAFAC class translation factor GTPase superfamily. Classic translation factor GTPase family. IF-2 subfamily.

The protein localises to the cytoplasm. Functionally, one of the essential components for the initiation of protein synthesis. Protects formylmethionyl-tRNA from spontaneous hydrolysis and promotes its binding to the 30S ribosomal subunits. Also involved in the hydrolysis of GTP during the formation of the 70S ribosomal complex. The sequence is that of Translation initiation factor IF-2 from Mycobacterium bovis (strain BCG / Pasteur 1173P2).